Reading from the N-terminus, the 227-residue chain is Small ribosomal subunit protein uS3 (227 aa).

One can recognise a KH type-2 domain in the interval 39–109 (IHRFFEKLTR…KIVINVDAVD (71 aa)).

Belongs to the universal ribosomal protein uS3 family. As to quaternary structure, part of the 30S ribosomal subunit. Forms a tight complex with proteins S10 and S14.

Binds the lower part of the 30S subunit head. Binds mRNA in the 70S ribosome, positioning it for translation. This chain is Small ribosomal subunit protein uS3, found in Mesomycoplasma hyopneumoniae (strain 232) (Mycoplasma hyopneumoniae).